The chain runs to 370 residues: Peptide chain release factor 2 (370 aa).

Gln249 bears the N5-methylglutamine mark.

The protein belongs to the prokaryotic/mitochondrial release factor family. In terms of processing, methylated by PrmC. Methylation increases the termination efficiency of RF2.

It localises to the cytoplasm. Its function is as follows. Peptide chain release factor 2 directs the termination of translation in response to the peptide chain termination codons UGA and UAA. The protein is Peptide chain release factor 2 of Kosmotoga olearia (strain ATCC BAA-1733 / DSM 21960 / TBF 19.5.1).